The following is a 365-amino-acid chain: UDP-N-acetylglucosamine--N-acetylmuramyl-(pentapeptide) pyrophosphoryl-undecaprenol N-acetylglucosamine transferase (365 aa).

UDP-N-acetyl-alpha-D-glucosamine contacts are provided by residues 19–21 (TGG), Asn-131, Arg-170, Ser-201, Ile-255, 274–279 (ALTVTE), and Gln-300.

The protein belongs to the glycosyltransferase 28 family. MurG subfamily.

The protein localises to the cell inner membrane. It catalyses the reaction di-trans,octa-cis-undecaprenyl diphospho-N-acetyl-alpha-D-muramoyl-L-alanyl-D-glutamyl-meso-2,6-diaminopimeloyl-D-alanyl-D-alanine + UDP-N-acetyl-alpha-D-glucosamine = di-trans,octa-cis-undecaprenyl diphospho-[N-acetyl-alpha-D-glucosaminyl-(1-&gt;4)]-N-acetyl-alpha-D-muramoyl-L-alanyl-D-glutamyl-meso-2,6-diaminopimeloyl-D-alanyl-D-alanine + UDP + H(+). It participates in cell wall biogenesis; peptidoglycan biosynthesis. In terms of biological role, cell wall formation. Catalyzes the transfer of a GlcNAc subunit on undecaprenyl-pyrophosphoryl-MurNAc-pentapeptide (lipid intermediate I) to form undecaprenyl-pyrophosphoryl-MurNAc-(pentapeptide)GlcNAc (lipid intermediate II). This is UDP-N-acetylglucosamine--N-acetylmuramyl-(pentapeptide) pyrophosphoryl-undecaprenol N-acetylglucosamine transferase from Acinetobacter baumannii (strain SDF).